Here is a 410-residue protein sequence, read N- to C-terminus: Probable serine/threonine-protein kinase PBL8 (410 aa).

Over residues 1–10 the composition is skewed to basic and acidic residues; it reads MGNCGTRDEA. The interval 1–45 is disordered; the sequence is MGNCGTRDEAAVFTPQAQAQQLQKKHSRSVSDLSDPSTPRFRDDS. Residue glycine 2 is the site of N-myristoyl glycine attachment. Cysteine 4 is lipidated: S-palmitoyl cysteine. Phosphothreonine is present on threonine 58. One can recognise a Protein kinase domain in the interval 69-350; that stretch reads FRPDYILGEG…DVVETLEPLQ (282 aa). ATP is bound by residues 75 to 83 and lysine 104; that span reads LGEGGFGTV. The residue at position 149 (tyrosine 149) is a Phosphotyrosine. Aspartate 199 functions as the Proton acceptor in the catalytic mechanism. A phosphoserine mark is found at serine 203 and serine 233. Phosphothreonine is present on residues threonine 234 and threonine 239. Phosphotyrosine is present on tyrosine 247.

This sequence belongs to the protein kinase superfamily. Ser/Thr protein kinase family. In terms of assembly, interacts with the Xanthomonas campestris effector XopAC/AvrAC.

It localises to the cell membrane. It catalyses the reaction L-seryl-[protein] + ATP = O-phospho-L-seryl-[protein] + ADP + H(+). The enzyme catalyses L-threonyl-[protein] + ATP = O-phospho-L-threonyl-[protein] + ADP + H(+). In terms of biological role, may be involved in plant defense signaling. In Arabidopsis thaliana (Mouse-ear cress), this protein is Probable serine/threonine-protein kinase PBL8.